The chain runs to 236 residues: Small ribosomal subunit protein uS3 (236 aa).

The KH type-2 domain maps to 39–112 (IREFITKHPK…RINLKVEEVG (74 aa)). Residues 212-236 (YGDDNDGADAQTGQASKKPKRSYKR) are disordered.

The protein belongs to the universal ribosomal protein uS3 family. In terms of assembly, part of the 30S ribosomal subunit. Forms a tight complex with proteins S10 and S14.

Its function is as follows. Binds the lower part of the 30S subunit head. Binds mRNA in the 70S ribosome, positioning it for translation. The polypeptide is Small ribosomal subunit protein uS3 (Rhodopirellula baltica (strain DSM 10527 / NCIMB 13988 / SH1)).